The chain runs to 283 residues: Secretory carrier-associated membrane protein 2 (283 aa).

The disordered stretch occupies residues 1–47 (MARHDPNPFADEEINPFANHTSVPPASNSYLKPLPPEPYDRGATVDI). Residues 1–123 (MARHDPNPFA…LQKIQYVAFT (123 aa)) are Cytoplasmic-facing. Polar residues predominate over residues 18–30 (ANHTSVPPASNSY). The stretch at 50-87 (DSGNDLRAKEMELQAKENELKRKEQELKRREDAIARTG) forms a coiled coil. 4 helical membrane passes run 124-144 (TLLG…VAWI), 151-171 (IWLL…VLWY), 186-206 (FGAF…AAVA), and 234-254 (IMYF…IWVI). Topologically, residues 255–283 (QQVYAYFRGSGKAAEMKREATKSTLMRAL) are cytoplasmic.

Belongs to the SCAMP family.

It localises to the cell membrane. The protein resides in the cytoplasmic vesicle. It is found in the secretory vesicle membrane. Functionally, probably involved in membrane trafficking. This Arabidopsis thaliana (Mouse-ear cress) protein is Secretory carrier-associated membrane protein 2 (SCAMP2).